Here is a 615-residue protein sequence, read N- to C-terminus: MPSRKFADGEVVRGRWPGSSLYYEVEILSHDSASQLYTVKYKDGTELELKENDIKPLTSFRQRKGGSTSSSPSRRRGSRSRSRSRSPGRPPKSARRSASASHQADIKEARREVEVKLTPLILKPFGNSISRYNGEPEHIERNDVPHKNTQEKFNLSQESSYIATQCSLRPKREEVKLKEIDSKEEKFVAKELAVRTFEVTPIRAKDLEFGGVPGVFLIMFGLPVFLFLLLLMCKQKDPSLLNFPPPLPALYELWETRVFGVYLLWFLIQVVFYLLPIGKVVEGTPLIDGRRLKYRLNGFYAFILTSAVIGTSLFQGVEFHYVYSHFLQFALAATVFCVVLSVYLYMRSLKAPRNDLSPASSGNAVYDFFIGRELNPRIGTFDLKYFCELRPGLIGWVVINLVMLLAEMKIQDRAVPSLAMILVNSFQLLYVVDALWNEEALLTTMDIIHDGFGFMLAFGDLVWVPFIYSFQAFYLVSHPNEVSWPMASLIIVLKFCGYVIFRGANSQKNAFRKNPSDPKLAHLKTIHTSTGKNLLVSGWWGFARHPNYLGDLIMALAWSLACGFNHILPYFYIIYFTMLLVHREARDEYHCKKKYGVAWEKYCQRVPYRIFPYIY.

A Tudor domain is found at 1–62 (MPSRKFADGE…DIKPLTSFRQ (62 aa)). At 1–211 (MPSRKFADGE…IRAKDLEFGG (211 aa)) the chain is on the nuclear side. The tract at residues 53-109 (DIKPLTSFRQRKGGSTSSSPSRRRGSRSRSRSRSPGRPPKSARRSASASHQADIKEA) is disordered. An N6-acetyllysine modification is found at Lys-55. Thr-58 is subject to Phosphothreonine. Residues Ser-59 and Ser-67 each carry the phosphoserine modification. Ser-71 and Ser-86 each carry phosphoserine; by CDK1. Basic residues predominate over residues 73–86 (SRRRGSRSRSRSRS). Ser-97 and Ser-99 each carry phosphoserine. Position 118 is a phosphothreonine (Thr-118). Ser-128 carries the post-translational modification Phosphoserine. Thr-200 carries the phosphothreonine modification. 8 helical membrane passes run 212–232 (VPGV…LLLM), 258–278 (VFGV…LPIG), 299–319 (FYAF…GVEF), 326–346 (FLQF…YLYM), 415–435 (VPSL…VDAL), 447–467 (IIHD…VPFI), 481–501 (EVSW…YVIF), and 561–581 (ACGF…MLLV). N6-acetyllysine is present on residues Lys-594 and Lys-601.

This sequence belongs to the ERG4/ERG24 family. In terms of assembly, interacts with CBX5. Interacts with DNA. Interaction with DNA is sequence independent with higher affinity for supercoiled and relaxed circular DNA than linear DNA. Interacts with lamin B. Interacts with CLNK. Interacts with TMEM147; promoting LBR localization to the nucleus inner membrane. Post-translationally, phosphorylated by CDK1 in mitosis when the inner nuclear membrane breaks down into vesicles that dissociate from the lamina and the chromatin. It is phosphorylated by different protein kinases in interphase when the membrane is associated with these structures. Phosphorylation of LBR and HP1 proteins may be responsible for some of the alterations in chromatin organization and nuclear structure which occur at various times during the cell cycle. Phosphorylated by SRPK1. In late anaphase LBR is dephosphorylated, probably by PP1 and/or PP2A, allowing reassociation with chromatin.

The protein localises to the nucleus inner membrane. The protein resides in the nucleus. It is found in the cytoplasm. It localises to the endoplasmic reticulum membrane. It carries out the reaction 5alpha-cholest-8,14-dien-3beta-ol + NADPH + H(+) = 5alpha-cholest-8-en-3beta-ol + NADP(+). It catalyses the reaction 4,4-dimethyl-5alpha-cholesta-8,24-dien-3beta-ol + NADP(+) = 4,4-dimethyl-5alpha-cholesta-8,14,24-trien-3beta-ol + NADPH + H(+). The enzyme catalyses 4,4-dimethyl-8,14-cholestadien-3beta-ol + NADPH + H(+) = 4,4-dimethyl-5alpha-cholest-8-en-3beta-ol + NADP(+). Its pathway is steroid biosynthesis; cholesterol biosynthesis. Catalyzes the reduction of the C14-unsaturated bond of lanosterol, as part of the metabolic pathway leading to cholesterol biosynthesis. Plays a critical role in myeloid cell cholesterol biosynthesis which is essential to both myeloid cell growth and functional maturation. Mediates the activation of NADPH oxidases, perhaps by maintaining critical levels of cholesterol required for membrane lipid raft formation during neutrophil differentiation. Anchors the lamina and the heterochromatin to the inner nuclear membrane. The sequence is that of Delta(14)-sterol reductase LBR (LBR) from Pongo abelii (Sumatran orangutan).